The following is a 68-amino-acid chain: Large ribosomal subunit protein uL30 (68 aa).

Residues 1–26 are disordered; the sequence is MSAKKSASKATVTVQQIGSPLRREPS. Residues 8–18 are compositionally biased toward polar residues; sequence SKATVTVQQIG.

It belongs to the universal ribosomal protein uL30 family. As to quaternary structure, part of the 50S ribosomal subunit.

The protein is Large ribosomal subunit protein uL30 of Parvibaculum lavamentivorans (strain DS-1 / DSM 13023 / NCIMB 13966).